A 110-amino-acid polypeptide reads, in one-letter code: MATTHGIALGMIETRGLVPAIEAADAMTKAAEVRLVGRSFVGGGYVTVMVRGETGAVNAAVRAGADACERVGDGLVAAHIIARVHSEVEIILPETPEDSDSAWCIANLNS.

The region spanning 8–93 (ALGMIETRGL…VHSEVEIILP (86 aa)) is the BMC domain.

This sequence belongs to the bacterial microcompartments protein family. CsoS1 subfamily. Homohexamer with a small central pore. Interacts with the N-terminus (residues 1-136) of RuBisCO (CbbL).

The protein localises to the carboxysome. One of shell proteins of the carboxysome, a polyhedral inclusion where RuBisCO (ribulose bisphosphate carboxylase, ccbL-ccbS) is sequestered. Assembles into hexamers which make sheets that form the facets of the polyhedral carboxysome. The shell probably limits the diffusion of CO(2) into and out of the carboxysome. There are estimated to be 540 CsoS1B proteins per carboxysome. In terms of biological role, unlike beta-carboxysomes, alpha-carboxysomes (Cb) can form without cargo protein. CsoS2 is essential for Cb formation and is also capable of targeting foreign proteins to the Cb. The Cb shell assembles with the aid of CsoS2; CsoS1A, CsoS1B and CsoS1C form the majority of the shell while CsoS4A and CsoS4B form vertices. CsoS1D forms pseudohexamers that probably control metabolite flux into and out of the shell. The chain is Carboxysome shell protein CsoS1B from Halothiobacillus neapolitanus (strain ATCC 23641 / c2) (Thiobacillus neapolitanus).